Reading from the N-terminus, the 452-residue chain is Protein disulfide-isomerase TMX3 (452 aa).

Positions Met-1–Ala-26 are cleaved as a signal peptide. The Thioredoxin domain maps to Leu-27–Arg-128. Residues Leu-27–Pro-375 lie on the Lumenal side of the membrane. Active-site nucleophile residues include Cys-53 and Cys-56. Cysteines 53 and 56 form a disulfide. Asn-258 and Asn-313 each carry an N-linked (GlcNAc...) asparagine glycan. The helical transmembrane segment at Leu-376 to Ile-396 threads the bilayer. Over Cys-397–Asp-452 the chain is Cytoplasmic. Positions Ser-405–Asp-452 are disordered. The span at Glu-443–Asp-452 shows a compositional bias: basic and acidic residues. Residues Lys-449–Asp-452 carry the Di-lysine motif motif.

The protein belongs to the protein disulfide isomerase family.

The protein resides in the endoplasmic reticulum membrane. It carries out the reaction Catalyzes the rearrangement of -S-S- bonds in proteins.. Probable disulfide isomerase, which participates in the folding of proteins containing disulfide bonds. May act as a dithiol oxidase. Acts as a regulator of endoplasmic reticulum-mitochondria contact sites via its ability to regulate redox signals. This is Protein disulfide-isomerase TMX3 (tmx3) from Xenopus laevis (African clawed frog).